The chain runs to 717 residues: F-box only protein 42 (717 aa).

Positions M1–E30 are enriched in acidic residues. The segment at M1–M47 is disordered. Residues E31–H43 show a composition bias toward basic and acidic residues. One can recognise an F-box domain in the interval N44 to F93. Kelch repeat units lie at residues S132–D184, L186–D242, M244–D293, and T295–H342. 2 disordered regions span residues R361–E472 and P508–T539. Low complexity predominate over residues P363–S376. Residues S365 and S373 each carry the phosphoserine modification. T378 carries the post-translational modification Phosphothreonine. 2 stretches are compositionally biased toward polar residues: residues Q416–G426 and S455–S469. The residue at position 552 (S552) is a Phosphoserine. Residues G570–G596 show a composition bias toward low complexity. The disordered stretch occupies residues G570–L635.

As to quaternary structure, component of some SCF complex, composed of CUL1, SKP1, RBX1 and FBXO42. Interacts (via the kelch domain) with p53/TP53; interaction is direct.

In terms of biological role, substrate-recognition component of some SCF (SKP1-CUL1-F-box protein)-type E3 ubiquitin ligase complex. Specifically recognizes p53/TP53, promoting its ubiquitination and degradation. The protein is F-box only protein 42 (FBXO42) of Pongo abelii (Sumatran orangutan).